The chain runs to 245 residues: MGRLDGKVIILTAAAQGIGQAAALAFAREGAKVIATDINESKLQELEKYPGIQTRVLDVTKKKQIDQFANEVERLDVLFNVAGFVHHGTVLDCEEKDWDFSMNLNVRSMYLMIKAFLPKMLAQKSGNIINMSSVASSVKGVVNRCVYSTTKAAVIGLTKSVAADFIQQGIRCNCVCPGTVDTPSLQERIQARGNPEEARNDFLKRQKTGRFATAEEIAMLCVYLASDESAYVTGNPVIIDGGWSL.

NAD(+) is bound by residues 16–18 (QGI), aspartate 37, and aspartate 58. Arginine 144 provides a ligand contact to substrate. Tyrosine 147 (proton acceptor) is an active-site residue. NAD(+) contacts are provided by residues lysine 151 and 180 to 184 (VDTPS). Arginine 188 and arginine 205 together coordinate substrate.

The protein belongs to the short-chain dehydrogenases/reductases (SDR) family. In terms of assembly, homotetramer. In terms of tissue distribution, detected in liver (at protein level).

It is found in the cytoplasm. The catalysed reaction is cis-4-hydroxy-L-proline + NAD(+) = 4-oxo-L-proline + NADH + H(+). The enzyme catalyses (R)-3-hydroxybutanoate + NAD(+) = acetoacetate + NADH + H(+). Its pathway is amino-acid metabolism. It functions in the pathway siderophore biosynthesis. In terms of biological role, NAD(H)-dependent dehydrogenase/reductase with a preference for cyclic substrates. Catalyzes stereoselective conversion of 4-oxo-L-proline to cis-4-hydroxy-L-proline, likely a detoxification mechanism for ketoprolines. Mediates the formation of 2,5-dihydroxybenzoate (2,5-DHBA), a siderophore that chelates free cytoplasmic iron and associates with LCN2, thereby regulating iron transport and homeostasis while protecting cells against free radical-induced oxidative stress. The iron-siderophore complex is imported into mitochondria, providing an iron source for mitochondrial metabolic processes in particular heme synthesis. May act as a 3-hydroxybutyrate dehydrogenase. The polypeptide is Dehydrogenase/reductase SDR family member 6 (Homo sapiens (Human)).